Consider the following 258-residue polypeptide: MLVLVSPAKTLDFENPPITNTHTQPCLLKQSQTLIDVCRELTPMDIASLMKVSDKIAGLNAARFADWQPPFTLDNAKQAIFAFRGDVYTGFDADHLSESQMASSQKHLRILSGLYGLLKPLDLIQPYRLEMGTKLTNPQGRNLYAFWGETITAEVNKALKEQGDDIIVNLASNEYFKSVNVKQLEGQLITPVFKDCKKGQFKVISFYAKKARGLMARYIVDTKPTSVEQLTAFDLEGYYYNEAQSTPTAPVFLRDEQK.

The protein belongs to the UPF0246 family.

The polypeptide is UPF0246 protein Sfri_2896 (Shewanella frigidimarina (strain NCIMB 400)).